The sequence spans 236 residues: Snake venom serine protease pallase (236 aa).

A Peptidase S1 domain is found at 1 to 227 (VIGGDECNIN…HLDWIENIIA (227 aa)). 6 cysteine pairs are disulfide-bonded: Cys7–Cys139, Cys26–Cys42, Cys74–Cys234, Cys118–Cys188, Cys150–Cys167, and Cys178–Cys203. Catalysis depends on charge relay system residues His41 and Asp86. Residue Ser182 is the Charge relay system of the active site.

This sequence belongs to the peptidase S1 family. Snake venom subfamily. Monomer. In terms of tissue distribution, expressed by the venom gland.

Its subcellular location is the secreted. Functionally, snake venom serine protease that may act in the hemostasis system of the prey. In Gloydius halys (Chinese water mocassin), this protein is Snake venom serine protease pallase.